The following is a 493-amino-acid chain: Lysostaphin (493 aa).

The signal sequence occupies residues 1–23; that stretch reads MKKTKNNYYTRPLAIGLSTFALA. The propeptide occupies 24–247; the sequence is SIVYGGIQNE…ALVQNRTALR (224 aa). Repeat copies occupy residues 49 to 61, 62 to 74, 75 to 87, 88 to 100, 101 to 113, 114 to 126, 127 to 139, 140 to 152, 153 to 165, 166 to 178, 179 to 191, 192 to 204, 205 to 217, and 218 to 230. Residues 49–243 are 15 X 13 AA approximate tandem repeats of A-E-V-E-T-S-K-A-P-V-E-N-T; it reads AEVETSKAPV…ETSKALVQNR (195 aa). Residues 52-232 are disordered; sequence ETSKAPVENT…SKAPVENTAE (181 aa). One copy of the 15; approximate repeat lies at 231-243; the sequence is AEVETSKALVQNR. His-279 and Asp-283 together coordinate Zn(2+). His-360 is an active-site residue. A Zn(2+)-binding site is contributed by His-362. In terms of domain architecture, SH3b spans 413-481; it reads SESASFTPNT…YLPVRTWNKS (69 aa).

This sequence belongs to the peptidase M23B family. As to quaternary structure, monomer. Zn(2+) serves as cofactor.

The protein resides in the secreted. The enzyme catalyses Hydrolysis of the -Gly-|-Gly- bond in the pentaglycine inter-peptide link joining staphylococcal cell wall peptidoglycans.. Lyses staphylococcal cells by hydrolyzing the polyglycine interpeptide bridges of the peptidoglycan. The protein is Lysostaphin (lss) of Staphylococcus simulans.